Reading from the N-terminus, the 1438-residue chain is DNA polymerase III PolC-type (1438 aa).

Residues 422–578 (YVVFDVETTG…YDTEATAYIF (157 aa)) enclose the Exonuclease domain.

This sequence belongs to the DNA polymerase type-C family. PolC subfamily.

Its subcellular location is the cytoplasm. The enzyme catalyses DNA(n) + a 2'-deoxyribonucleoside 5'-triphosphate = DNA(n+1) + diphosphate. Functionally, required for replicative DNA synthesis. This DNA polymerase also exhibits 3' to 5' exonuclease activity. In Staphylococcus aureus (strain bovine RF122 / ET3-1), this protein is DNA polymerase III PolC-type.